We begin with the raw amino-acid sequence, 79 residues long: Exodeoxyribonuclease 7 small subunit (79 aa).

Belongs to the XseB family. As to quaternary structure, heterooligomer composed of large and small subunits.

The protein resides in the cytoplasm. It carries out the reaction Exonucleolytic cleavage in either 5'- to 3'- or 3'- to 5'-direction to yield nucleoside 5'-phosphates.. Functionally, bidirectionally degrades single-stranded DNA into large acid-insoluble oligonucleotides, which are then degraded further into small acid-soluble oligonucleotides. The sequence is that of Exodeoxyribonuclease 7 small subunit from Geobacillus kaustophilus (strain HTA426).